Reading from the N-terminus, the 475-residue chain is MKYEAVIGLEVHAELLTESKIFCSCTTKFGGEPNTHVCPVCLGLPGTLPVLNKKVVEYAVRAGLALNCTIANFSKMDRKNYFYPDLPKAYQISQYDLPLCSNGYVEIEVDGKVKKIGIKRIHIEEDAGKLLHENTDGSLVDYNRAGVPLIEIVSEPDMSTPEEAYQYLTKLKSILEYTEVSDCKMQEGSLRVDTNVSVRPVGSTELGTKIELKNLNSFRAVQKALEYEIKRQIKVLEEGGTIVQETRRWNEAKGITEPMRTKEEAHDYRYFPEPDLVPIIVTDEWKEEIRKSLPEMPHRKRERFISEYGLPEYDAKIITSSKKIADFFEKCALEYDSPKAVSNWLMGEFSRLMNETGKEIDEVPVTPQMLVKLLKLIDNGVISGSIAKTVFEEMFGTGKEPEVIVEEKGLKQIANEDELREIIKKVIAENPKSVEDYKNGKEKAMGFLVGQVMKATKGKANPQLTNQILKEELSK.

The protein belongs to the GatB/GatE family. GatB subfamily. In terms of assembly, heterotrimer of A, B and C subunits.

The enzyme catalyses L-glutamyl-tRNA(Gln) + L-glutamine + ATP + H2O = L-glutaminyl-tRNA(Gln) + L-glutamate + ADP + phosphate + H(+). The catalysed reaction is L-aspartyl-tRNA(Asn) + L-glutamine + ATP + H2O = L-asparaginyl-tRNA(Asn) + L-glutamate + ADP + phosphate + 2 H(+). Functionally, allows the formation of correctly charged Asn-tRNA(Asn) or Gln-tRNA(Gln) through the transamidation of misacylated Asp-tRNA(Asn) or Glu-tRNA(Gln) in organisms which lack either or both of asparaginyl-tRNA or glutaminyl-tRNA synthetases. The reaction takes place in the presence of glutamine and ATP through an activated phospho-Asp-tRNA(Asn) or phospho-Glu-tRNA(Gln). The chain is Aspartyl/glutamyl-tRNA(Asn/Gln) amidotransferase subunit B from Thermoanaerobacter pseudethanolicus (strain ATCC 33223 / 39E) (Clostridium thermohydrosulfuricum).